A 35-amino-acid polypeptide reads, in one-letter code: U1-theraphotoxin-Hs1f (35 aa).

Intrachain disulfides connect C3/C16, C7/C27, and C21/C32.

Belongs to the neurotoxin 12 (Hwtx-2) family. 02 (Hwtx-2) subfamily. In terms of tissue distribution, expressed by the venom gland.

The protein localises to the secreted. In terms of biological role, blocks neuromuscular transmission. Acts cooperatively to potentiate the activity of huwentoxin-I. Paralyzes locusts and kills mice following intracerebroventricular injection. This Cyriopagopus schmidti (Chinese bird spider) protein is U1-theraphotoxin-Hs1f.